The chain runs to 602 residues: Aspartate--tRNA(Asp/Asn) ligase (602 aa).

E175 contributes to the L-aspartate binding site. Positions 199 to 202 (QIFK) are aspartate. An L-aspartate-binding site is contributed by R221. ATP is bound by residues 221–223 (RDE) and Q230. H458 provides a ligand contact to L-aspartate. E492 contacts ATP. L-aspartate is bound at residue R499. 544–547 (GLDR) provides a ligand contact to ATP.

This sequence belongs to the class-II aminoacyl-tRNA synthetase family. Type 1 subfamily. In terms of assembly, homodimer.

The protein localises to the cytoplasm. The catalysed reaction is tRNA(Asx) + L-aspartate + ATP = L-aspartyl-tRNA(Asx) + AMP + diphosphate. Functionally, aspartyl-tRNA synthetase with relaxed tRNA specificity since it is able to aspartylate not only its cognate tRNA(Asp) but also tRNA(Asn). Reaction proceeds in two steps: L-aspartate is first activated by ATP to form Asp-AMP and then transferred to the acceptor end of tRNA(Asp/Asn). The protein is Aspartate--tRNA(Asp/Asn) ligase of Cupriavidus pinatubonensis (strain JMP 134 / LMG 1197) (Cupriavidus necator (strain JMP 134)).